A 149-amino-acid polypeptide reads, in one-letter code: Transcriptional repressor NrdR (149 aa).

Residues C3 to C34 fold into a zinc finger. Residues P49 to Q139 form the ATP-cone domain.

This sequence belongs to the NrdR family. Zn(2+) serves as cofactor.

Functionally, negatively regulates transcription of bacterial ribonucleotide reductase nrd genes and operons by binding to NrdR-boxes. The chain is Transcriptional repressor NrdR from Histophilus somni (strain 129Pt) (Haemophilus somnus).